Reading from the N-terminus, the 2098-residue chain is 1-phosphatidylinositol 3-phosphate 5-kinase (2098 aa).

A disordered region spans residues 1–45; it reads MATDDKTSPTLDSANDLPRSPTSPSHLTHFKPLTPDQDEPPFKSA. At alanine 2 the chain carries N-acetylalanine. 2 positions are modified to phosphoserine; by autocatalysis: serine 23 and serine 48. The disordered stretch occupies residues 57–123; it reads KERAEGGQGE…EPTFGGHDPR (67 aa). Residues 66-88 are compositionally biased toward polar residues; the sequence is EQQPLSGSWTSPQLPSRTQSVRS. Phosphoserine is present on serine 88. The FYVE-type zinc finger occupies 158 to 218; sequence DSQCKECYDC…ACTYCRKIAL (61 aa). Zn(2+)-binding residues include cysteine 164, cysteine 167, cysteine 180, cysteine 183, cysteine 188, cysteine 191, cysteine 210, and cysteine 213. The tract at residues 292–329 is disordered; sequence VQEDAGKSPARNRSASITNLSLDRSGSPMVPSYETSVS. Phosphoserine is present on residues serine 299, serine 307, and serine 312. Polar residues predominate over residues 302–315; that stretch reads RNRSASITNLSLDR. A Phosphoserine; by PKB/AKT1 or PKB/AKT2 modification is found at serine 318. The residue at position 329 (serine 329) is a Phosphoserine. The DEP domain maps to 365 to 440; it reads HSSGMEFQDH…DEYALYRPLQ (76 aa). The span at 442–459 shows a compositional bias: polar residues; it reads TEFSETPSPDSDSVNSVE. The tract at residues 442-469 is disordered; the sequence is TEFSETPSPDSDSVNSVEGHSEPSWFKD. Residues 460-469 show a composition bias toward basic and acidic residues; it reads GHSEPSWFKD. Serine 475 bears the Phosphoserine mark. A disordered region spans residues 484-505; the sequence is GDDNLANSASPSKRTSVSSFQS. Over residues 488–505 the composition is skewed to polar residues; that stretch reads LANSASPSKRTSVSSFQS. The interval 616-868 is chaperonin-like domain; sequence MMALLQQLLH…MICVAYHSQL (253 aa). 2 disordered regions span residues 1161 to 1191 and 1512 to 1616; these read RIQPKNSDPFAHSKDASSTSSGQSGSKNEGD and FQQE…STDS. Residues 1177–1186 are compositionally biased toward low complexity; sequence SSTSSGQSGS. Residue serine 1522 is modified to Phosphoserine; by autocatalysis. Phosphoserine occurs at positions 1544 and 1549. Positions 1562 to 1578 are enriched in low complexity; sequence LTTLSSQSSTSSTHLQL. Serine 1669 is modified (phosphoserine; by autocatalysis). A disordered region spans residues 1692-1799; sequence QWNSAEEGLP…PQDEVDGGDT (108 aa). Positions 1704–1714 are enriched in low complexity; it reads STSDSRPKSSS. Over residues 1723–1735 the composition is skewed to polar residues; the sequence is GGQTNRTTETEPQ. The residue at position 1754 (serine 1754) is a Phosphoserine. A PIPK domain is found at 1758–2084; that stretch reads SSQKRETLRG…RFCEAMDKYF (327 aa). The catalytic stretch occupies residues 1842 to 2098; that stretch reads EEDFIRSLSH…DHWTGLGLNC (257 aa). 2 positions are modified to phosphoserine; by autocatalysis: serine 1969 and serine 2053.

As to quaternary structure, component of the PI(3,5)P2 regulatory complex/PAS complex, at least composed of PIKFYVE, FIG4 and VAC14. VAC14 nucleates the assembly of the complex and serves as a scaffold by pentamerizing into a star-shaped structure, which can bind a single copy each of PIKFYVE and FIG4 and coordinates their activities. Interacts (via chaperonin-like domain) with RABEPK; the interaction recruits RABEPK to the endosomal membrane. Interacts with SPAG9. Interacts with EGFR. Post-translationally, autophosphorylates which inhibits its own phosphatidylinositol 3-phosphate 5-kinase activity, stimulates FIG4 lipid phosphatase activity and down-regulates lipid product formation. Dephosphorylated by FIG4 in the PI(3,5)P2 regulatory complex, at Ser-48, Ser-1669 and Ser-2053. Phosphorylated in response to insulin at Ser-318 in a protein kinase B (PKB)-dependent manner.

It localises to the endosome membrane. The protein localises to the early endosome membrane. Its subcellular location is the cytoplasmic vesicle. The protein resides in the phagosome membrane. It is found in the late endosome membrane. The catalysed reaction is a 1,2-diacyl-sn-glycero-3-phospho-(1D-myo-inositol-3-phosphate) + ATP = a 1,2-diacyl-sn-glycero-3-phospho-(1D-myo-inositol-3,5-bisphosphate) + ADP + H(+). It catalyses the reaction a 1,2-diacyl-sn-glycero-3-phospho-(1D-myo-inositol) + ATP = a 1,2-diacyl-sn-glycero-3-phospho-(1D-myo-inositol-5-phosphate) + ADP + H(+). It carries out the reaction L-seryl-[protein] + ATP = O-phospho-L-seryl-[protein] + ADP + H(+). With respect to regulation, inhibited by apilimod and YM201636. In terms of biological role, dual specificity kinase implicated in myriad essential cellular processes such as maintenance of endomembrane homeostasis, and endocytic-vacuolar pathway, lysosomal trafficking, nuclear transport, stress- or hormone-induced signaling and cell cycle progression. The PI(3,5)P2 regulatory complex regulates both the synthesis and turnover of phosphatidylinositol 3,5-bisphosphate (PtdIns(3,5)P2). Sole enzyme to catalyze the phosphorylation of phosphatidylinositol 3-phosphate on the fifth hydroxyl of the myo-inositol ring, to form (PtdIns(3,5)P2). Also catalyzes the phosphorylation of phosphatidylinositol on the fifth hydroxyl of the myo-inositol ring, to form phosphatidylinositol 5-phosphate (PtdIns(5)P). Has serine-protein kinase activity and is able to autophosphorylate and transphosphorylate. Autophosphorylation inhibits its own phosphatidylinositol 3-phosphate 5-kinase activity, stimulates FIG4 lipid phosphatase activity and down-regulates lipid product formation. Involved in key endosome operations such as fission and fusion in the course of endosomal cargo transport. Required for the maturation of early into late endosomes, phagosomes and lysosomes. Regulates vacuole maturation and nutrient recovery following engulfment of macromolecules, initiates the redistribution of accumulated lysosomal contents back into the endosome network. Critical regulator of the morphology, degradative activity, and protein turnover of the endolysosomal system in macrophages and platelets. In neutrophils, critical to perform chemotaxis, generate ROS, and undertake phagosome fusion with lysosomes. Plays a key role in the processing and presentation of antigens by major histocompatibility complex class II (MHC class II) mediated by CTSS. Regulates melanosome biogenesis by controlling the delivery of proteins from the endosomal compartment to the melanosome. Essential for systemic glucose homeostasis, mediates insulin-induced signals for endosome/actin remodeling in the course of GLUT4 translocation/glucose uptake activation. Supports microtubule-based endosome-to-trans-Golgi network cargo transport, through association with SPAG9 and RABEPK. Mediates EGFR trafficking to the nucleus. Functionally, (Microbial infection) Required for cell entry of coronaviruses SARS-CoV and SARS-CoV-2, as well as human coronavirus EMC (HCoV-EMC) by endocytosis. This chain is 1-phosphatidylinositol 3-phosphate 5-kinase, found in Homo sapiens (Human).